Reading from the N-terminus, the 217-residue chain is MOB kinase activator 3A (217 aa).

4 residues coordinate Zn(2+): C83, C88, H165, and H170.

This sequence belongs to the MOB1/phocein family.

May regulate the activity of kinases. This is MOB kinase activator 3A (Mob3a) from Mus musculus (Mouse).